Here is a 329-residue protein sequence, read N- to C-terminus: Bifunctional nuclease 2 (329 aa).

One can recognise a BFN domain in the interval 121 to 256 (CVHNNPQGGN…YLAYSDGMRV (136 aa)). The UVR domain occupies 287–322 (DTKEFDLVRNMMQAVDEERYDEAAEWRDKLGKFQAK).

Belongs to the bifunctional nuclease family.

The protein localises to the nucleus. Its function is as follows. Bifunctional nuclease with both RNase and DNase activities. Involved in basal defense response. Participates in abscisic acid-derived callose deposition following infection by a necrotrophic pathogen. This is Bifunctional nuclease 2 (BBD2) from Arabidopsis thaliana (Mouse-ear cress).